Reading from the N-terminus, the 336-residue chain is Glycerol-3-phosphate dehydrogenase [NAD(P)+] (336 aa).

Residues W11, R33, and K105 each contribute to the NADPH site. The sn-glycerol 3-phosphate site is built by K105, G141, and S143. A145 is a binding site for NADPH. Sn-glycerol 3-phosphate-binding residues include K196, D249, S259, R260, and N261. Catalysis depends on K196, which acts as the Proton acceptor. Residue R260 coordinates NADPH. NADPH-binding residues include V284 and E286.

The protein belongs to the NAD-dependent glycerol-3-phosphate dehydrogenase family.

Its subcellular location is the cytoplasm. It catalyses the reaction sn-glycerol 3-phosphate + NAD(+) = dihydroxyacetone phosphate + NADH + H(+). It carries out the reaction sn-glycerol 3-phosphate + NADP(+) = dihydroxyacetone phosphate + NADPH + H(+). It functions in the pathway membrane lipid metabolism; glycerophospholipid metabolism. Its function is as follows. Catalyzes the reduction of the glycolytic intermediate dihydroxyacetone phosphate (DHAP) to sn-glycerol 3-phosphate (G3P), the key precursor for phospholipid synthesis. The protein is Glycerol-3-phosphate dehydrogenase [NAD(P)+] of Delftia acidovorans (strain DSM 14801 / SPH-1).